A 265-amino-acid polypeptide reads, in one-letter code: Phosphatidylglycerol--prolipoprotein diacylglyceryl transferase (265 aa).

Helical transmembrane passes span 17 to 37 (VAVR…VVLG), 57 to 77 (LLLY…VLFY), 89 to 109 (ILAV…VLVA), 127 to 147 (FIAP…FING), 176 to 196 (QLYQ…VFAA), 201 to 218 (LRAV…LRFV), and 233 to 253 (LVPG…VGLA). R140 serves as a coordination point for a 1,2-diacyl-sn-glycero-3-phospho-(1'-sn-glycerol).

It belongs to the Lgt family.

Its subcellular location is the cell inner membrane. It catalyses the reaction L-cysteinyl-[prolipoprotein] + a 1,2-diacyl-sn-glycero-3-phospho-(1'-sn-glycerol) = an S-1,2-diacyl-sn-glyceryl-L-cysteinyl-[prolipoprotein] + sn-glycerol 1-phosphate + H(+). The protein operates within protein modification; lipoprotein biosynthesis (diacylglyceryl transfer). In terms of biological role, catalyzes the transfer of the diacylglyceryl group from phosphatidylglycerol to the sulfhydryl group of the N-terminal cysteine of a prolipoprotein, the first step in the formation of mature lipoproteins. The chain is Phosphatidylglycerol--prolipoprotein diacylglyceryl transferase from Azoarcus sp. (strain BH72).